We begin with the raw amino-acid sequence, 327 residues long: Phenylalanine--tRNA ligase alpha subunit (327 aa).

Glu-252 contributes to the Mg(2+) binding site.

The protein belongs to the class-II aminoacyl-tRNA synthetase family. Phe-tRNA synthetase alpha subunit type 1 subfamily. Tetramer of two alpha and two beta subunits. Mg(2+) serves as cofactor.

The protein localises to the cytoplasm. It catalyses the reaction tRNA(Phe) + L-phenylalanine + ATP = L-phenylalanyl-tRNA(Phe) + AMP + diphosphate + H(+). In Shewanella frigidimarina (strain NCIMB 400), this protein is Phenylalanine--tRNA ligase alpha subunit.